The chain runs to 689 residues: Beta-galactosidase BbgII (689 aa).

The substrate site is built by Arg122 and Asn160. Residue Glu161 is the Proton donor of the active site. Glu320 serves as the catalytic Nucleophile. Residues Trp328 and 368–371 (EKWH) contribute to the substrate site.

The protein belongs to the glycosyl hydrolase 42 family.

It carries out the reaction Hydrolysis of terminal non-reducing beta-D-galactose residues in beta-D-galactosides.. In Bifidobacterium bifidum (strain DSM 20082 / JCM 1254 / BCRC 11844 / KCTC 3440 / E319f (Variant a)), this protein is Beta-galactosidase BbgII.